Reading from the N-terminus, the 74-residue chain is Anionic peptide clone 8 (74 aa).

The first 24 residues, 1–24 (MVSKSLIVLLLVSVLVSTFFTTEA), serve as a signal peptide directing secretion.

This sequence belongs to the non-disulfide-bridged peptide (NDBP) superfamily. Long chain multifunctional peptide (group 2) family. Expressed by the venom gland.

The protein resides in the secreted. Functionally, may be an antimicrobial peptide. The protein is Anionic peptide clone 8 of Tityus costatus (Brazilian scorpion).